The following is a 247-amino-acid chain: Proteasome subunit alpha (247 aa).

It belongs to the peptidase T1A family. The 20S proteasome core is composed of 14 alpha and 14 beta subunits that assemble into four stacked heptameric rings, resulting in a barrel-shaped structure. The two inner rings, each composed of seven catalytic beta subunits, are sandwiched by two outer rings, each composed of seven alpha subunits. The catalytic chamber with the active sites is on the inside of the barrel. Has a gated structure, the ends of the cylinder being occluded by the N-termini of the alpha-subunits. Is capped at one or both ends by the proteasome regulatory ATPase, PAN.

Its subcellular location is the cytoplasm. Its activity is regulated as follows. The formation of the proteasomal ATPase PAN-20S proteasome complex, via the docking of the C-termini of PAN into the intersubunit pockets in the alpha-rings, triggers opening of the gate for substrate entry. Interconversion between the open-gate and close-gate conformations leads to a dynamic regulation of the 20S proteasome proteolysis activity. Functionally, component of the proteasome core, a large protease complex with broad specificity involved in protein degradation. In Methanosarcina thermophila, this protein is Proteasome subunit alpha.